The following is an 858-amino-acid chain: Elongation factor 2 (858 aa).

A tr-type G domain is found at 17–362; it reads ANIRNMSVIA…MITIHLPSPV (346 aa). A GTP-binding site is contributed by 26–33; sequence AHVDHGKS. Residue Thr-54 is modified to Phosphothreonine. Position 57 is a phosphothreonine; by EEF2K (Thr-57). Residue Thr-59 is modified to Phosphothreonine. N6-succinyllysine is present on Lys-152. Residues 158-161 and 216-218 contribute to the GTP site; these read NKMD and SGL. N6-acetyllysine is present on Lys-235. Lys-239 carries the post-translational modification N6-acetyllysine; alternate. A Glycyl lysine isopeptide (Lys-Gly) (interchain with G-Cter in SUMO1); alternate cross-link involves residue Lys-239. At Tyr-265 the chain carries Phosphotyrosine; by CSK. Position 272 is an N6-acetyllysine; alternate (Lys-272). Lys-272 carries the N6-succinyllysine; alternate modification. The residue at position 275 (Lys-275) is an N6-acetyllysine. Lys-322 is covalently cross-linked (Glycyl lysine isopeptide (Lys-Gly) (interchain with G-Cter in SUMO)). Ser-325 bears the Phosphoserine mark. Tyr-373 is modified (phosphotyrosine; by CSK). Thr-435 carries the phosphothreonine modification. Residues Lys-439 and Lys-445 each carry the N6-acetyllysine modification. Ser-502 carries the phosphoserine modification. N6,N6,N6-trimethyllysine; by EEF2KMT is present on Lys-525. Lys-529 participates in a covalent cross-link: Glycyl lysine isopeptide (Lys-Gly) (interchain with G-Cter in SUMO). Lys-572 is subject to N6-succinyllysine. Residue Ser-595 is modified to Phosphoserine; by CDK2. Position 619 is an N6-acetyllysine (Lys-619). His-715 is subject to Diphthamide.

This sequence belongs to the TRAFAC class translation factor GTPase superfamily. Classic translation factor GTPase family. EF-G/EF-2 subfamily. Binds to 80S ribosomes. Actively translating ribosomes show mutually exclusive binding of eIF5a (EIF5A or EIF5A2) and EEF2/eEF2. Interacts with SERBP1; interaction sequesters EEF2/eEF2 at the A-site of the ribosome, thereby blocking the interaction sites of the mRNA-tRNA complex, promoting ribosome stabilization and hibernation. Interacts with HABP4; interaction takes place at the A-site of hibernating ribosomes and promotes ribosome stabilization. Component of the mRNA surveillance SURF complex, at least composed of ERF1, ERF3 (ERF3A or ERF3B), EEF2, UPF1/RENT1, SMG1, SMG8 and SMG9. Interacts with RBPMS2. Phosphorylation by EF-2 kinase completely inactivates EF-2; it requires prior phosphorylation by CDK2 at Ser-595 during mitotic prometaphase. Phosphorylation by CSK promotes SUMOylation, proteolytic cleavage, and nuclear translocation if the C-terminal fragment. In terms of processing, diphthamide is 2-[3-carboxyamido-3-(trimethyl-ammonio)propyl]histidine. Post-translationally, ISGylated. Proteolytically processed at two sites following phosphorylation by CSK. In terms of processing, SUMOylated following phosphorylation by CSK, promotes proteolytic cleavage.

It localises to the cytoplasm. Its subcellular location is the nucleus. It carries out the reaction GTP + H2O = GDP + phosphate + H(+). Its function is as follows. Catalyzes the GTP-dependent ribosomal translocation step during translation elongation. During this step, the ribosome changes from the pre-translocational (PRE) to the post-translocational (POST) state as the newly formed A-site-bound peptidyl-tRNA and P-site-bound deacylated tRNA move to the P and E sites, respectively. Catalyzes the coordinated movement of the two tRNA molecules, the mRNA and conformational changes in the ribosome. This chain is Elongation factor 2 (Eef2), found in Mus musculus (Mouse).